The following is an 815-amino-acid chain: Phosphatidylinositol 4-phosphate 5-kinase 9 (815 aa).

MORN repeat units follow at residues 58–80 (YSGS…DGCV), 81–103 (YDGE…SGAS), 104–126 (YDGE…NKLT), 127–149 (YKGR…NGDV), 150–172 (FEGS…NKNV), 173–195 (YLGD…TGDS), 196–218 (YEGS…DGGC), and 219–240 (YVGT…AGTR). The PIPK domain maps to 391-809 (GHRSYDLMLS…RFLEFIKKVF (419 aa)). The activation loop stretch occupies residues 769–790 (YNMTKKIEHAYKSLHFDSLSIS).

In terms of assembly, interacts with CINV1. In terms of tissue distribution, widely expressed.

The protein localises to the membrane. It localises to the nucleus. It carries out the reaction a 1,2-diacyl-sn-glycero-3-phospho-(1D-myo-inositol 4-phosphate) + ATP = a 1,2-diacyl-sn-glycero-3-phospho-(1D-myo-inositol-4,5-bisphosphate) + ADP + H(+). Functionally, plays a role in sugar-mediated root development. Interaction with CINV1 induces repression of CINV1 activity and negative regulation of sugar-mediated root cell elongation. This is Phosphatidylinositol 4-phosphate 5-kinase 9 (PIP5K9) from Arabidopsis thaliana (Mouse-ear cress).